A 51-amino-acid chain; its full sequence is Large ribosomal subunit protein bL33 (51 aa).

The protein belongs to the bacterial ribosomal protein bL33 family.

The sequence is that of Large ribosomal subunit protein bL33 from Ruthia magnifica subsp. Calyptogena magnifica.